The sequence spans 1181 residues: Putative primase (1181 aa).

Residues 1141 to 1181 are disordered; sequence RSHSTMVEHDMDDDESTNKKQELEEEDEECIDIDEYNNERF. Over residues 1163 to 1181 the composition is skewed to acidic residues; the sequence is LEEEDEECIDIDEYNNERF.

The protein belongs to the eukaryotic-type primase small subunit family.

In terms of biological role, synthesizes small RNA primers for the Okazaki fragments on both template strands at replication forks during viral DNA synthesis. This chain is Putative primase, found in Magallana gigas (Pacific oyster).